The sequence spans 352 residues: N-acetyl-gamma-glutamyl-phosphate reductase (352 aa).

Cysteine 155 is an active-site residue.

Belongs to the NAGSA dehydrogenase family. Type 1 subfamily.

It is found in the cytoplasm. The catalysed reaction is N-acetyl-L-glutamate 5-semialdehyde + phosphate + NADP(+) = N-acetyl-L-glutamyl 5-phosphate + NADPH + H(+). The protein operates within amino-acid biosynthesis; L-arginine biosynthesis; N(2)-acetyl-L-ornithine from L-glutamate: step 3/4. Functionally, catalyzes the NADPH-dependent reduction of N-acetyl-5-glutamyl phosphate to yield N-acetyl-L-glutamate 5-semialdehyde. This chain is N-acetyl-gamma-glutamyl-phosphate reductase, found in Rippkaea orientalis (strain PCC 8801 / RF-1) (Cyanothece sp. (strain PCC 8801)).